We begin with the raw amino-acid sequence, 411 residues long: UDP-N-acetylmuramoylalanine--D-glutamate ligase (411 aa).

Residue 92 to 98 (GTDGKST) coordinates ATP.

The protein belongs to the MurCDEF family.

Its subcellular location is the cytoplasm. The enzyme catalyses UDP-N-acetyl-alpha-D-muramoyl-L-alanine + D-glutamate + ATP = UDP-N-acetyl-alpha-D-muramoyl-L-alanyl-D-glutamate + ADP + phosphate + H(+). It participates in cell wall biogenesis; peptidoglycan biosynthesis. Cell wall formation. Catalyzes the addition of glutamate to the nucleotide precursor UDP-N-acetylmuramoyl-L-alanine (UMA). The protein is UDP-N-acetylmuramoylalanine--D-glutamate ligase of Hydrogenobaculum sp. (strain Y04AAS1).